Here is a 300-residue protein sequence, read N- to C-terminus: MSVSRLFSNPKFVYPLVGATIGSIGLAYYSTQAQFYIANETGKTFTGGDQWIDLKLKKSEDLTHNTKHLTFELLNPDDVSGLITASMLMTKYVTPKGNNVIRPYTPVSDPDQKGTLDFVIKRYENGKMSNHIHNLKEGETLSFKGPVVKWKWEPNQFKSIALIGGGTGITPLYQLLREITSNPEDKTKVSLIYGNTSPEDVLIKDRIDDIAAKHKDQVKVTYFVDENKATKDWEGEVGFITKEFLEKELDKPSPDFKIFVCGPPGLYKAISGVKVSPTDQGEVEGALKDLGFSKEHVFKF.

The chain crosses the membrane as a helical span at residues 12–29 (FVYPLVGATIGSIGLAYY). Residues 49-153 (DQWIDLKLKK…KGPVVKWKWE (105 aa)) form the FAD-binding FR-type domain. Residue 156–191 (QFKSIALIGGGTGITPLYQLLREITSNPEDKTKVSL) coordinates FAD.

The protein belongs to the flavoprotein pyridine nucleotide cytochrome reductase family. FAD is required as a cofactor.

The protein resides in the mitochondrion outer membrane. It catalyses the reaction 2 Fe(III)-[cytochrome b5] + NADH = 2 Fe(II)-[cytochrome b5] + NAD(+) + H(+). Functionally, may mediate the reduction of outer membrane cytochrome b5. The sequence is that of NADH-cytochrome b5 reductase 2 (MCR1) from Lodderomyces elongisporus (strain ATCC 11503 / CBS 2605 / JCM 1781 / NBRC 1676 / NRRL YB-4239) (Yeast).